The primary structure comprises 272 residues: R-spondin-3 (272 aa).

Positions methionine 1 to serine 21 are cleaved as a signal peptide. FU repeat units lie at residues proline 35–glycine 86 and isoleucine 92–alanine 135. N-linked (GlcNAc...) asparagine glycosylation occurs at asparagine 36. Disulfide bonds link cysteine 41/cysteine 48, cysteine 45/cysteine 54, cysteine 57/cysteine 76, cysteine 80/cysteine 95, cysteine 98/cysteine 105, cysteine 102/cysteine 111, cysteine 114/cysteine 125, cysteine 129/cysteine 142, cysteine 148/cysteine 190, cysteine 159/cysteine 166, and cysteine 199/cysteine 206. One can recognise a TSP type-1 domain in the interval histidine 147–glutamine 207. The interval valine 201–histidine 272 is disordered. The segment covering lysine 213–proline 223 has biased composition (basic residues). Over residues asparagine 224 to glutamine 252 the composition is skewed to basic and acidic residues.

It belongs to the R-spondin family. As to quaternary structure, interacts with the extracellular domain of FZD8 and LRP6. It however does not form a ternary complex with FZD8 and LRP6. Interacts with WNT1. Binds heparin. Interacts with LGR4, LGR5 and LGR6. In terms of tissue distribution, ubiquitously expressed. Expressed at higher level in placenta, small intestine, fetal thymus and lymph node. Highly expressed in endothelial cells.

It is found in the secreted. Its function is as follows. Activator of the canonical Wnt signaling pathway by acting as a ligand for LGR4-6 receptors, which acts as a key regulator of angiogenesis. Upon binding to LGR4-6 (LGR4, LGR5 or LGR6), LGR4-6 associate with phosphorylated LRP6 and frizzled receptors that are activated by extracellular Wnt receptors, triggering the canonical Wnt signaling pathway to increase expression of target genes. Also regulates the canonical Wnt/beta-catenin-dependent pathway and non-canonical Wnt signaling by acting as an inhibitor of ZNRF3, an important regulator of the Wnt signaling pathway. Acts as a ligand for frizzled FZD8 and LRP6. May negatively regulate the TGF-beta pathway. Acts as a key regulator of angiogenesis by controlling vascular stability and pruning: acts by activating the non-canonical Wnt signaling pathway in endothelial cells. Can also amplify Wnt signaling pathway independently of LGR4-6 receptors, possibly by acting as a direct antagonistic ligand to RNF43 and ZNRF3. This is R-spondin-3 (RSPO3) from Homo sapiens (Human).